We begin with the raw amino-acid sequence, 1165 residues long: Symplekin (1165 aa).

HEAT repeat units lie at residues 23 to 58 (TATARAKVVDWCNELVIASPSTKCELLAKVQETVLG), 61 to 95 (AELAEEFLESVLSLAHDSNMEVRKQVVAFVEQVCK), 98 to 140 (VELL…YLCS), 147 to 186 (SAEQAWNILSLIKAQILDMIDNENDGIRTNAIKFLEGVVV), and 218 to 257 (KLQEEGNNILDILLQFHGTTHISSVNLIACTSSLCTIAKM). The disordered stretch occupies residues 365–384 (DQQQREMELDTEELERQKQK). Residues 367 to 384 (QQREMELDTEELERQKQK) are compositionally biased toward basic and acidic residues.

The protein belongs to the Symplekin family. As to quaternary structure, interacts with Cpsf73 and Cpsf100 forming a core cleavage factor required for both polyadenylated and histone mRNA processing. Interacts with Slbp and Lsm11.

The protein resides in the nucleus. In terms of biological role, component of a protein complex required for cotranscriptional processing of 3'-ends of polyadenylated and histone pre-mRNA. Involved in germline stem cell transit amplification, differentiation and mitosis-to-meiosis transition. The polypeptide is Symplekin (Drosophila melanogaster (Fruit fly)).